A 276-amino-acid chain; its full sequence is NH(3)-dependent NAD(+) synthetase (276 aa).

43 to 50 is a binding site for ATP; the sequence is GISGGVDS. Position 49 (aspartate 49) interacts with Mg(2+). Arginine 146 serves as a coordination point for deamido-NAD(+). Residue threonine 166 coordinates ATP. Mg(2+) is bound at residue glutamate 171. Deamido-NAD(+)-binding residues include lysine 179 and aspartate 186. 2 residues coordinate ATP: lysine 195 and threonine 217. 266-267 serves as a coordination point for deamido-NAD(+); sequence HK.

The protein belongs to the NAD synthetase family. Homodimer.

The enzyme catalyses deamido-NAD(+) + NH4(+) + ATP = AMP + diphosphate + NAD(+) + H(+). The protein operates within cofactor biosynthesis; NAD(+) biosynthesis; NAD(+) from deamido-NAD(+) (ammonia route): step 1/1. Its function is as follows. Catalyzes the ATP-dependent amidation of deamido-NAD to form NAD. Uses ammonia as a nitrogen source. The polypeptide is NH(3)-dependent NAD(+) synthetase (Shewanella baltica (strain OS185)).